Reading from the N-terminus, the 342-residue chain is ATP-dependent (S)-NAD(P)H-hydrate dehydratase (342 aa).

The region spanning 11 to 337 is the YjeF C-terminal domain; that stretch reads ILPALEKVVP…EYLGHRLFTF (327 aa). Residues glycine 127 and 180–186 each bind (6S)-NADPHX; that span reads NVMEHKR. Residues 229–233 and 248–257 each bind ATP; these read KGKTD and GSPRRCGGQG. Aspartate 258 lines the (6S)-NADPHX pocket.

It belongs to the NnrD/CARKD family. Mg(2+) is required as a cofactor.

The catalysed reaction is (6S)-NADHX + ATP = ADP + phosphate + NADH + H(+). It carries out the reaction (6S)-NADPHX + ATP = ADP + phosphate + NADPH + H(+). Catalyzes the dehydration of the S-form of NAD(P)HX at the expense of ATP, which is converted to ADP. Together with NAD(P)HX epimerase, which catalyzes the epimerization of the S- and R-forms, the enzyme allows the repair of both epimers of NAD(P)HX, a damaged form of NAD(P)H that is a result of enzymatic or heat-dependent hydration. The sequence is that of ATP-dependent (S)-NAD(P)H-hydrate dehydratase from Physcomitrium patens (Spreading-leaved earth moss).